A 287-amino-acid polypeptide reads, in one-letter code: 2-dehydro-3-deoxyphosphooctonate aldolase (287 aa).

This sequence belongs to the KdsA family.

Its subcellular location is the cytoplasm. The enzyme catalyses D-arabinose 5-phosphate + phosphoenolpyruvate + H2O = 3-deoxy-alpha-D-manno-2-octulosonate-8-phosphate + phosphate. It functions in the pathway carbohydrate biosynthesis; 3-deoxy-D-manno-octulosonate biosynthesis; 3-deoxy-D-manno-octulosonate from D-ribulose 5-phosphate: step 2/3. The protein operates within bacterial outer membrane biogenesis; lipopolysaccharide biosynthesis. This is 2-dehydro-3-deoxyphosphooctonate aldolase from Magnetococcus marinus (strain ATCC BAA-1437 / JCM 17883 / MC-1).